The sequence spans 768 residues: DNA ligase 1 (768 aa).

The segment at 42–139 (VEVSQSSSDS…KEPPLESNAR (98 aa)) is disordered. A compositionally biased stretch (basic and acidic residues) spans 52–99 (KNVDGRSTSEKRKVESVKLVDESKHNNHDDTGTQNVERENNIVSEAKK). The segment covering 104-124 (GSSSSSSDAVSSNNDSGASTP) has biased composition (low complexity). Residues 309–318 (KLRLQLAEKT) are interaction with target DNA. Glu414 contributes to the ATP binding site. Lys416 serves as the catalytic N6-AMP-lysine intermediate. ATP contacts are provided by Arg421 and Arg437. Glu469 provides a ligand contact to Mg(2+). The tract at residues 490–492 (KRK) is interaction with target DNA. Position 568 (Glu568) interacts with Mg(2+). 3 residues coordinate ATP: Lys573, Arg587, and Lys593.

It belongs to the ATP-dependent DNA ligase family. It depends on Mg(2+) as a cofactor.

It is found in the nucleus. The catalysed reaction is ATP + (deoxyribonucleotide)n-3'-hydroxyl + 5'-phospho-(deoxyribonucleotide)m = (deoxyribonucleotide)n+m + AMP + diphosphate.. DNA ligase that seals nicks in double-stranded DNA during DNA replication, DNA recombination and DNA repair. The protein is DNA ligase 1 (cdc17) of Schizosaccharomyces pombe (strain 972 / ATCC 24843) (Fission yeast).